A 346-amino-acid polypeptide reads, in one-letter code: Galactitol 1-phosphate 5-dehydrogenase (346 aa).

Cys-38, His-59, Cys-89, Cys-92, Cys-95, Cys-103, and Glu-144 together coordinate Zn(2+).

The protein belongs to the zinc-containing alcohol dehydrogenase family. Zn(2+) serves as cofactor.

It carries out the reaction galactitol 1-phosphate + NAD(+) = keto-D-tagatose 6-phosphate + NADH + H(+). Its function is as follows. Converts galactitol 1-phosphate to tagatose 6-phosphate. The chain is Galactitol 1-phosphate 5-dehydrogenase (gatD) from Escherichia coli O157:H7.